The sequence spans 895 residues: Androgen receptor (895 aa).

The interval 1 to 533 (MEVQLGLGRV…PIDYYFPPQK (533 aa)) is modulating. The tract at residues 1–562 (MEVQLGLGRV…GSCKVFFKRA (562 aa)) is interaction with ZNF318. Disordered stretches follow at residues 33 to 155 (VIQN…PTFP) and 175 to 211 (QLLQ…YLGG). Composition is skewed to low complexity over residues 44–81 (AASA…GSPQ) and 175–200 (QLLQ…ASGA). A Phosphoserine; by CDK9 modification is found at Ser66. Position 79 is a phosphoserine (Ser79). The segment covering 201 to 211 (PTSSKDNYLGG) has biased composition (polar residues). Tyr208 is subject to Phosphotyrosine; by CSK. Ser241 is subject to Phosphoserine. Tyr252 bears the Phosphotyrosine; by CSK and TNK2 mark. A phosphotyrosine; by CSK mark is found at Tyr292, Tyr331, Tyr342, and Tyr347. The residue at position 348 (Tyr348) is a Phosphotyrosine; by CSK and TNK2. A Glycyl lysine isopeptide (Lys-Gly) (interchain with G-Cter in SUMO) cross-link involves residue Lys371. Tyr378 bears the Phosphotyrosine; by CSK mark. Lys496 is covalently cross-linked (Glycyl lysine isopeptide (Lys-Gly) (interchain with G-Cter in SUMO)). Phosphotyrosine; by CSK is present on residues Tyr510 and Tyr527. The interaction with LPXN stretch occupies residues 527-894 (YYFPPQKTCL…GKVKPIYFHT (368 aa)). The segment at residues 534–607 (TCLICGDEAS…AGMTLGARKL (74 aa)) is a DNA-binding region (nuclear receptor). 2 NR C4-type zinc fingers span residues 535-555 (CLIC…CGSC) and 571-595 (CASR…LRKC). The interaction with HIPK3 stretch occupies residues 547-637 (YGALTCGSCK…TEETAQKLTV (91 aa)). The tract at residues 567-894 (QKYLCASRND…GKVKPIYFHT (328 aa)) is interaction with CCAR1. An interaction with KAT7 region spans residues 600–894 (MTLGARKLKK…GKVKPIYFHT (295 aa)). Ser626 bears the Phosphoserine; by STK4/MST1 mark. The NR LBD domain occupies 644–875 (ECQPIFLNVL…DFPEMMAEII (232 aa)). Residues Asn681 and Arg728 each coordinate 17beta-hydroxy-5alpha-androstan-3-one. Glycyl lysine isopeptide (Lys-Gly) (interchain with G-Cter in ubiquitin) cross-links involve residues Lys821 and Lys823. Residue Thr853 participates in 17beta-hydroxy-5alpha-androstan-3-one binding. Tyr891 carries the post-translational modification Phosphotyrosine; by CSK.

Belongs to the nuclear hormone receptor family. NR3 subfamily. Binds DNA as a homodimer. Part of a ternary complex containing AR, EFCAB6/DJBP and PARK7. Interacts with HIPK3 and NR0B2 in the presence of androgen. The ligand binding domain interacts with KAT7/HBO1 in the presence of dihydrotestosterone. Interacts with EFCAB6/DJBP, PQBP1, RANBP9, RBAK, SPDEF, SRA1, TGFB1I1 and RREB1. Interacts with ZMIZ1/ZIMP10 and ZMIZ2/ZMIP7 which both enhance its transactivation activity. Interacts with SLC30A9 and RAD54L2/ARIP4. Interacts with MACROD1 (via macro domain). Interacts via the ligand-binding domain with LXXLL and FXXLF motifs from NCOA1, NCOA2, NCOA3 and MAGEA11. Interacts (via nuclear receptor DNA binding domain and nuclear receptor ligand binding domain) with NCOA4. The AR N-terminal poly-Gln region binds Ran resulting in enhancement of AR-mediated transactivation. Ran-binding decreases as the poly-Gln length increases. Interacts with HIP1 (via coiled coil domain). Interacts (via ligand-binding domain) with TRIM68. Interacts with TNK2. Interacts with USP26. Interacts with RNF6. Interacts (regulated by RNF6 probably through polyubiquitination) with RNF14; regulates AR transcriptional activity. Interacts with PRMT2 and TRIM24. Interacts with RACK1. Interacts with RANBP10; this interaction enhances dihydrotestosterone-induced AR transcriptional activity. Interacts with PRPF6 in a hormone-independent way; this interaction enhances dihydrotestosterone-induced AR transcriptional activity. Interacts with STK4/MST1. Interacts with ZIPK/DAPK3. Interacts with LPXN. Interacts with MAK. Part of a complex containing AR, MAK and NCOA3. Interacts with CRY1. Interacts with CCAR1 and GATA2. Interacts with ZNF318. Interacts with BUD31. Interacts with ARID4A. Interacts with ARID4B. Interacts (via NR LBD domain) with ZBTB7A; the interaction is direct and androgen-dependent. Interacts with NCOR1. Interacts with NCOR2. Interacts with CRY2 in a ligand-dependent manner. Post-translationally, phosphorylated in prostate cancer cells in response to several growth factors including EGF. Phosphorylation is induced by c-Src kinase (CSK). Tyr-510 is one of the major phosphorylation sites and an increase in phosphorylation and Src kinase activity is associated with prostate cancer progression. Phosphorylation by TNK2 enhances the DNA-binding and transcriptional activity. Phosphorylation at Ser-66 by CDK9 regulates AR promoter selectivity and cell growth. Sumoylated on Lys-371 (major) and Lys-496. Ubiquitinated. Deubiquitinated by USP26. 'Lys-6' and 'Lys-27'-linked polyubiquitination by RNF6 modulates AR transcriptional activity and specificity. In terms of processing, palmitoylated by ZDHHC7 and ZDHHC21. Palmitoylation is required for plasma membrane targeting and for rapid intracellular signaling via ERK and AKT kinases and cAMP generation.

The protein localises to the nucleus. It is found in the cytoplasm. In terms of biological role, steroid hormone receptors are ligand-activated transcription factors that regulate eukaryotic gene expression and affect cellular proliferation and differentiation in target tissues. Transcription factor activity is modulated by bound coactivator and corepressor proteins like ZBTB7A that recruits NCOR1 and NCOR2 to the androgen response elements/ARE on target genes, negatively regulating androgen receptor signaling and androgen-induced cell proliferation. Transcription activation is also down-regulated by NR0B2. Activated, but not phosphorylated, by HIPK3 and ZIPK/DAPK3. This chain is Androgen receptor (AR), found in Papio hamadryas (Hamadryas baboon).